A 284-amino-acid polypeptide reads, in one-letter code: Bifunctional protein FolD (284 aa).

Residues 165-167, Ser-190, and Ile-231 each bind NADP(+); that span reads GAS.

Belongs to the tetrahydrofolate dehydrogenase/cyclohydrolase family. Homodimer.

It carries out the reaction (6R)-5,10-methylene-5,6,7,8-tetrahydrofolate + NADP(+) = (6R)-5,10-methenyltetrahydrofolate + NADPH. The catalysed reaction is (6R)-5,10-methenyltetrahydrofolate + H2O = (6R)-10-formyltetrahydrofolate + H(+). It functions in the pathway one-carbon metabolism; tetrahydrofolate interconversion. In terms of biological role, catalyzes the oxidation of 5,10-methylenetetrahydrofolate to 5,10-methenyltetrahydrofolate and then the hydrolysis of 5,10-methenyltetrahydrofolate to 10-formyltetrahydrofolate. The protein is Bifunctional protein FolD of Polynucleobacter necessarius subsp. necessarius (strain STIR1).